A 357-amino-acid polypeptide reads, in one-letter code: UDP-N-acetylglucosamine--N-acetylmuramyl-(pentapeptide) pyrophosphoryl-undecaprenol N-acetylglucosamine transferase (357 aa).

UDP-N-acetyl-alpha-D-glucosamine contacts are provided by residues 10–12 (TGG), Asn124, Ser189, Ile244, and Gln289.

It belongs to the glycosyltransferase 28 family. MurG subfamily.

It is found in the cell membrane. It catalyses the reaction Mur2Ac(oyl-L-Ala-gamma-D-Glu-L-Lys-D-Ala-D-Ala)-di-trans,octa-cis-undecaprenyl diphosphate + UDP-N-acetyl-alpha-D-glucosamine = beta-D-GlcNAc-(1-&gt;4)-Mur2Ac(oyl-L-Ala-gamma-D-Glu-L-Lys-D-Ala-D-Ala)-di-trans,octa-cis-undecaprenyl diphosphate + UDP + H(+). It participates in cell wall biogenesis; peptidoglycan biosynthesis. Functionally, cell wall formation. Catalyzes the transfer of a GlcNAc subunit on undecaprenyl-pyrophosphoryl-MurNAc-pentapeptide (lipid intermediate I) to form undecaprenyl-pyrophosphoryl-MurNAc-(pentapeptide)GlcNAc (lipid intermediate II). The chain is UDP-N-acetylglucosamine--N-acetylmuramyl-(pentapeptide) pyrophosphoryl-undecaprenol N-acetylglucosamine transferase from Lactococcus lactis subsp. cremoris (strain MG1363).